The chain runs to 314 residues: Mycothiol acetyltransferase (314 aa).

E39 lines the 1D-myo-inositol 2-(L-cysteinylamino)-2-deoxy-alpha-D-glucopyranoside pocket. L80–A82 contributes to the acetyl-CoA binding site. Residues F159 to P313 enclose the N-acetyltransferase domain. Positions 186, 228, and 237 each coordinate 1D-myo-inositol 2-(L-cysteinylamino)-2-deoxy-alpha-D-glucopyranoside. Acetyl-CoA contacts are provided by residues L241–V243 and Q248–R254. Residue Y275 coordinates 1D-myo-inositol 2-(L-cysteinylamino)-2-deoxy-alpha-D-glucopyranoside.

Belongs to the acetyltransferase family. MshD subfamily. Monomer.

The enzyme catalyses 1D-myo-inositol 2-(L-cysteinylamino)-2-deoxy-alpha-D-glucopyranoside + acetyl-CoA = mycothiol + CoA + H(+). In terms of biological role, catalyzes the transfer of acetyl from acetyl-CoA to desacetylmycothiol (Cys-GlcN-Ins) to form mycothiol. The chain is Mycothiol acetyltransferase from Jonesia denitrificans (strain ATCC 14870 / DSM 20603 / BCRC 15368 / CIP 55.134 / JCM 11481 / NBRC 15587 / NCTC 10816 / Prevot 55134) (Listeria denitrificans).